A 340-amino-acid chain; its full sequence is GPALPP motifs-containing protein 1 (340 aa).

A disordered region spans residues 1-304 (MARDLIGPAL…PQERIPFDRD (304 aa)). Residue alanine 2 is modified to N-acetylalanine. Positions 7-12 (GPALPP) match the GPALPP motif 1 motif. Serine 28 bears the Phosphoserine mark. The GPALPP motif 2 motif lies at 32–37 (GPALPP). Over residues 60–69 (GNQESEEDDS) the composition is skewed to acidic residues. The GPALPP motif 3 motif lies at 92–97 (GPALPP). A Phosphoserine modification is found at serine 105. Residues 107–116 (PRPIIGPALP) show a composition bias toward pro residues. The GPALPP motif 4 motif lies at 112–117 (GPALPP). The span at 124–133 (QKSDKGRDDP) shows a compositional bias: basic and acidic residues. Threonine 138 is modified (phosphothreonine). Serine 140 and serine 141 each carry phosphoserine. Basic and acidic residues-rich tracts occupy residues 163–187 (EFEK…KPIV), 227–261 (PADR…KRLA), 269–279 (ESKRSESLMDI), and 287–304 (KAAE…FDRD). A Glycyl lysine isopeptide (Lys-Gly) (interchain with G-Cter in SUMO2) cross-link involves residue lysine 271. Residue lysine 308 forms a Glycyl lysine isopeptide (Lys-Gly) (interchain with G-Cter in SUMO2) linkage.

This is GPALPP motifs-containing protein 1 (GPALPP1) from Homo sapiens (Human).